Here is an 85-residue protein sequence, read N- to C-terminus: U4-theraphotoxin-Hhn1ad (85 aa).

An N-terminal signal peptide occupies residues 1–22; it reads MKVTLIAILTCAAVLVLHTTAA. Residues 23 to 48 constitute a propeptide that is removed on maturation; it reads EELKTESQLMEVGMPDTELATVDEER. 3 cysteine pairs are disulfide-bonded: Cys-52-Cys-66, Cys-56-Cys-77, and Cys-71-Cys-82.

Belongs to the neurotoxin 12 (Hwtx-2) family. 02 (Hwtx-2) subfamily. As to expression, expressed by the venom gland.

It localises to the secreted. In terms of biological role, postsynaptic neurotoxin. This is U4-theraphotoxin-Hhn1ad from Cyriopagopus hainanus (Chinese bird spider).